The primary structure comprises 444 residues: Maintenance of mitochondrial morphology protein 1 (444 aa).

Topologically, residues 1-110 (MNNLDNLAGN…SFSGWSFIEG (110 aa)) are lumenal. A helical transmembrane segment spans residues 111-131 (FIIGQFSVIIVLIFFIKFFVF). The Cytoplasmic portion of the chain corresponds to 132-444 (SDGSSSNSSN…TDDVPLSKAE (313 aa)). An SMP-LTD domain is found at 207–419 (PSESLDWFNV…EPRFQCIRLP (213 aa)).

This sequence belongs to the MMM1 family. In terms of assembly, homodimer. Component of the ER-mitochondria encounter structure (ERMES) or MDM complex, composed of MMM1, MDM10, MDM12 and MDM34. An MMM1 homodimer associates with one molecule of MDM12 on each side in a pairwise head-to-tail manner, and the SMP-LTD domains of MMM1 and MDM12 generate a continuous hydrophobic tunnel for phospholipid trafficking.

The protein localises to the endoplasmic reticulum membrane. Functionally, component of the ERMES/MDM complex, which serves as a molecular tether to connect the endoplasmic reticulum (ER) and mitochondria. Components of this complex are involved in the control of mitochondrial shape and protein biogenesis, and function in nonvesicular lipid trafficking between the ER and mitochondria. The MDM12-MMM1 subcomplex functions in the major beta-barrel assembly pathway that is responsible for biogenesis of all outer membrane beta-barrel proteins, and acts in a late step after the SAM complex. The MDM10-MDM12-MMM1 subcomplex further acts in the TOM40-specific pathway after the action of the MDM12-MMM1 complex. Essential for establishing and maintaining the structure of mitochondria and maintenance of mtDNA nucleoids. This chain is Maintenance of mitochondrial morphology protein 1, found in Vanderwaltozyma polyspora (strain ATCC 22028 / DSM 70294 / BCRC 21397 / CBS 2163 / NBRC 10782 / NRRL Y-8283 / UCD 57-17) (Kluyveromyces polysporus).